The primary structure comprises 457 residues: Serine/threonine-protein phosphatase 2A activator 2 (457 aa).

Disordered regions lie at residues 387 to 407 (DAHG…GEGQ) and 426 to 457 (AEQE…IPFD). Residues 391 to 400 (HIHPAGKPHA) are compositionally biased toward basic residues.

The protein belongs to the PTPA-type PPIase family.

It localises to the cytoplasm. It carries out the reaction [protein]-peptidylproline (omega=180) = [protein]-peptidylproline (omega=0). PPIases accelerate the folding of proteins. It catalyzes the cis-trans isomerization of proline imidic peptide bonds in oligopeptides. Acts as a regulatory subunit for PP2A-like phosphatases modulating their activity or substrate specificity, probably by inducing a conformational change in the catalytic subunit, a direct target of the PPIase. Can reactivate inactive phosphatase PP2A-phosphatase methylesterase complexes (PP2Ai) in presence of ATP and Mg(2+) by dissociating the inactive form from the complex. This is Serine/threonine-protein phosphatase 2A activator 2 (RRD2) from Mycosarcoma maydis (Corn smut fungus).